The primary structure comprises 190 residues: Probable RNA-binding protein 18 (190 aa).

Residues 25–106 form the RRM domain; that stretch reads HRLWIGNLDP…KKLVVRWAHA (82 aa). The disordered stretch occupies residues 166-190; sequence VYSYFKPPDKKRTTPYSRTAWKSRR.

The chain is Probable RNA-binding protein 18 (RBM18) from Bos taurus (Bovine).